The primary structure comprises 86 residues: Apolipoprotein C-I (86 aa).

Positions 1–26 (MRLFLSLPVLVVALLTILEGPGPAQG) are cleaved as a signal peptide.

Belongs to the apolipoprotein C1 family.

It is found in the secreted. Its function is as follows. Inhibitor of lipoprotein binding to the low density lipoprotein (LDL) receptor, LDL receptor-related protein, and very low density lipoprotein (VLDL) receptor. Associates with high density lipoproteins (HDL) and the triacylglycerol-rich lipoproteins in the plasma and makes up about 10% of the protein of the VLDL and 2% of that of HDL. Appears to interfere directly with fatty acid uptake and is also the major plasma inhibitor of cholesteryl ester transfer protein (CETP). Binds free fatty acids and reduces their intracellular esterification. Modulates the interaction of APOE with beta-migrating VLDL and inhibits binding of beta-VLDL to the LDL receptor-related protein. The polypeptide is Apolipoprotein C-I (APOC1) (Plecturocebus moloch (Dusky titi monkey)).